A 330-amino-acid polypeptide reads, in one-letter code: Beta-ketoacyl-[acyl-carrier-protein] synthase III (330 aa).

Active-site residues include Cys-115 and His-255. Positions 256-260 (QANFR) are ACP-binding. Residue Asn-285 is part of the active site.

Belongs to the thiolase-like superfamily. FabH family. In terms of assembly, homodimer.

The protein localises to the cytoplasm. The catalysed reaction is malonyl-[ACP] + acetyl-CoA + H(+) = 3-oxobutanoyl-[ACP] + CO2 + CoA. The protein operates within lipid metabolism; fatty acid biosynthesis. In terms of biological role, catalyzes the condensation reaction of fatty acid synthesis by the addition to an acyl acceptor of two carbons from malonyl-ACP. Catalyzes the first condensation reaction which initiates fatty acid synthesis and may therefore play a role in governing the total rate of fatty acid production. Possesses both acetoacetyl-ACP synthase and acetyl transacylase activities. Its substrate specificity determines the biosynthesis of branched-chain and/or straight-chain of fatty acids. This chain is Beta-ketoacyl-[acyl-carrier-protein] synthase III, found in Helicobacter pylori (strain P12).